The sequence spans 456 residues: MRSPSLAVAATTVLGLFSSSALAYYGNTTTVALTTTEFVTTCPYPTTFTVSTCTNDVCQPTVVTVTEETTITIPGTVVCPVVSTPSGSASASASAGASSEEEGSVVTTQVTVTDFTTYCPYPTTLTITKCENNECHPTTIPVETATTVTVTGEVICPTTTSTSPKESSSEAASSEVITTQVTVTDYTTYCPLPTTIVVSTCDEEKCHPTTIEVSTPTTVVVPGTVVCPTTSVATPSQSEVATKPTTINSVVTTGVTTTDYTTYCPSPTTIVVSTCDEEKCHPTTIEVSTPTTVVVPGTVVHPSTSATIITTTAEQPPASPEVSTIESVVTTPATLTGYTTYCPEPTTIVLTTCSDDQCKPHTVSATGGETVSIPATIVVPSSHTTQVEITVSSASVPASEKPTTPVTVAAVSSSPAVSTETPSLVTPAISIAGAAAVNVVPTTAFGLFAIILASIF.

The first 23 residues, 1–23, serve as a signal peptide directing secretion; it reads MRSPSLAVAATTVLGLFSSSALA. N27 is a glycosylation site (N-linked (GlcNAc...) asparagine). A lipid anchor (GPI-anchor amidated glycine) is attached at G433. Positions 434-456 are cleaved as a propeptide — removed in mature form; sequence AAAVNVVPTTAFGLFAIILASIF.

Post-translationally, the GPI-anchor is attached to the protein in the endoplasmic reticulum and serves to target the protein to the cell surface. There, the glucosamine-inositol phospholipid moiety is cleaved off and the GPI-modified mannoprotein is covalently attached via its lipidless GPI glycan remnant to the 1,6-beta-glucan of the outer cell wall layer.

The protein localises to the secreted. It localises to the cell wall. Its subcellular location is the membrane. Cell wall protein which contributes to cell wall synthesis and is important for acquiring normal surface properties. Required for virulence in a mouse infection model. The protein is GPI-anchored protein 13 (PGA13) of Candida albicans (strain SC5314 / ATCC MYA-2876) (Yeast).